Here is a 405-residue protein sequence, read N- to C-terminus: Cysteine desulfurase IscS (405 aa).

Pyridoxal 5'-phosphate is bound by residues 75–76 (AT), asparagine 156, glutamine 184, and 204–206 (SAH). At lysine 207 the chain carries N6-(pyridoxal phosphate)lysine. Residue threonine 244 participates in pyridoxal 5'-phosphate binding. Residue cysteine 329 is the Cysteine persulfide intermediate of the active site. Cysteine 329 is a binding site for [2Fe-2S] cluster.

Belongs to the class-V pyridoxal-phosphate-dependent aminotransferase family. NifS/IscS subfamily. As to quaternary structure, homodimer. Forms a heterotetramer with IscU, interacts with other sulfur acceptors. Requires pyridoxal 5'-phosphate as cofactor.

Its subcellular location is the cytoplasm. It carries out the reaction (sulfur carrier)-H + L-cysteine = (sulfur carrier)-SH + L-alanine. It participates in cofactor biosynthesis; iron-sulfur cluster biosynthesis. In terms of biological role, master enzyme that delivers sulfur to a number of partners involved in Fe-S cluster assembly, tRNA modification or cofactor biosynthesis. Catalyzes the removal of elemental sulfur atoms from cysteine to produce alanine. Functions as a sulfur delivery protein for Fe-S cluster synthesis onto IscU, an Fe-S scaffold assembly protein, as well as other S acceptor proteins. This is Cysteine desulfurase IscS from Methylobacillus flagellatus (strain ATCC 51484 / DSM 6875 / VKM B-1610 / KT).